We begin with the raw amino-acid sequence, 374 residues long: uncharacterized protein (374 aa).

A coiled-coil region spans residues 39–66; the sequence is RDVRKHLESRDAKQELIDSLEEAVRDSR.

This is an uncharacterized protein from Mycobacterium tuberculosis (strain CDC 1551 / Oshkosh).